Reading from the N-terminus, the 269-residue chain is Mitochondrial genome maintenance protein MGM101 (269 aa).

Residues 1 to 30 (MKSIFKVRGCVSHAAQFCQKRTVVSTGTSN) constitute a mitochondrion transit peptide.

It belongs to the MGM101 family.

The protein resides in the mitochondrion matrix. Its subcellular location is the mitochondrion nucleoid. Functionally, performs an essential function in the repair of oxidatively damaged mtDNA that is required for the maintenance of the mitochondrial genome. Binds to DNA. The sequence is that of Mitochondrial genome maintenance protein MGM101 (MGM101) from Saccharomyces cerevisiae (strain ATCC 204508 / S288c) (Baker's yeast).